Here is a 423-residue protein sequence, read N- to C-terminus: Putative competence-damage inducible protein (423 aa).

This sequence belongs to the CinA family.

In Streptococcus pyogenes serotype M49 (strain NZ131), this protein is Putative competence-damage inducible protein.